The following is a 175-amino-acid chain: Respiratory supercomplex factor 1-B, mitochondrial (175 aa).

Positions 3–94 (DQADVLADPD…TERKQRREFE (92 aa)) constitute an HIG1 domain. The next 2 membrane-spanning stretches (helical) occupy residues 30-46 (PLIPLGCAATCYALYRA) and 66-83 (IYAQFFTLLAVVAGGMYY). Positions 83 to 115 (YKTERKQRREFEKKVEERKAQEKRDAWLRELEA) form a coiled coil.

The protein belongs to the RCF1 family. In terms of assembly, associates with the respiratory chain complex III/complex IV supercomplex.

It localises to the mitochondrion membrane. Functionally, cytochrome c oxidase subunit which plays a role in assembly of respiratory supercomplexes. This Talaromyces marneffei (strain ATCC 18224 / CBS 334.59 / QM 7333) (Penicillium marneffei) protein is Respiratory supercomplex factor 1-B, mitochondrial (rcf1-B).